The chain runs to 386 residues: DNA-directed RNA polymerase subunit Rpo1C (386 aa).

Belongs to the RNA polymerase beta' chain family. As to quaternary structure, part of the RNA polymerase complex.

The protein localises to the cytoplasm. The catalysed reaction is RNA(n) + a ribonucleoside 5'-triphosphate = RNA(n+1) + diphosphate. Functionally, DNA-dependent RNA polymerase (RNAP) catalyzes the transcription of DNA into RNA using the four ribonucleoside triphosphates as substrates. Forms part of the jaw domain. This chain is DNA-directed RNA polymerase subunit Rpo1C, found in Methanococcus vannielii (strain ATCC 35089 / DSM 1224 / JCM 13029 / OCM 148 / SB).